The chain runs to 426 residues: Neuromedin-U receptor 1 (426 aa).

Residues 1 to 65 are Extracellular-facing; it reads MTPLCLNCSV…QTELFMPICA (65 aa). 3 N-linked (GlcNAc...) asparagine glycosylation sites follow: N7, N27, and N41. Residues 66–86 form a helical membrane-spanning segment; the sequence is TYLLIFVVGAVGNGLTCLVIL. At 87–97 the chain is on the cytoplasmic side; the sequence is RHKAMRTPTNY. A helical membrane pass occupies residues 98–118; sequence YLFSLAVSDLLVLLVGLPLEL. Residues 119–138 lie on the Extracellular side of the membrane; the sequence is YEMWHNYPFLLGVGGCYFRT. The cysteines at positions 134 and 219 are disulfide-linked. The helical transmembrane segment at 139–161 threads the bilayer; that stretch reads LLFEMVCLASVLNVTALSVERYV. Over 162–181 the chain is Cytoplasmic; the sequence is AVVHPLQARSMVTRAHVRRV. The chain crosses the membrane as a helical span at residues 182–202; the sequence is LGAVWGLAMLCSLPNTSLHGI. At 203 to 235 the chain is on the extracellular side; sequence RQLHVPCRGPVPDSAVCMLVRPRALYNMVVQTT. The helical transmembrane segment at 236-256 threads the bilayer; it reads ALLFFCLPMAIMSVLYLLIGL. Residues 257 to 294 lie on the Cytoplasmic side of the membrane; that stretch reads RLRRERLLLMQEAKGRGSAAARSRYTCRLQQHDRGRRQ. A helical membrane pass occupies residues 295–315; sequence VTKMLFVLVVVFGICWAPFHA. The Extracellular portion of the chain corresponds to 316–338; the sequence is DRVMWSVVSQWTDGLHLAFQHVH. The chain crosses the membrane as a helical span at residues 339 to 359; it reads VISGIFFYLGSAANPVLYSLM. The Cytoplasmic portion of the chain corresponds to 360–426; the sequence is SSRFRETFQE…PEAQQETDPS (67 aa).

Belongs to the G-protein coupled receptor 1 family. Expressed in greatest abundance in peripheral organs, particularly in elements of the gastrointestinal and urogenital systems with highest levels in testes. In central nervous system structures express levels are much lower than those seen in peripheral organs. Within the CNS, has been detected in highest abundance in the cerebellum, dorsal root ganglia, hippocampus, and spinal cord.

Its subcellular location is the cell membrane. Functionally, receptor for the neuromedin-U and neuromedin-S neuropeptides. The chain is Neuromedin-U receptor 1 (NMUR1) from Homo sapiens (Human).